A 310-amino-acid polypeptide reads, in one-letter code: Aspartate carbamoyltransferase catalytic subunit (310 aa).

The carbamoyl phosphate site is built by R55 and T56. K85 contributes to the L-aspartate binding site. R106, H135, and Q138 together coordinate carbamoyl phosphate. Residues R168 and R230 each contribute to the L-aspartate site. L268 and P269 together coordinate carbamoyl phosphate.

It belongs to the aspartate/ornithine carbamoyltransferase superfamily. ATCase family. As to quaternary structure, heterododecamer (2C3:3R2) of six catalytic PyrB chains organized as two trimers (C3), and six regulatory PyrI chains organized as three dimers (R2).

It catalyses the reaction carbamoyl phosphate + L-aspartate = N-carbamoyl-L-aspartate + phosphate + H(+). It functions in the pathway pyrimidine metabolism; UMP biosynthesis via de novo pathway; (S)-dihydroorotate from bicarbonate: step 2/3. In terms of biological role, catalyzes the condensation of carbamoyl phosphate and aspartate to form carbamoyl aspartate and inorganic phosphate, the committed step in the de novo pyrimidine nucleotide biosynthesis pathway. This chain is Aspartate carbamoyltransferase catalytic subunit, found in Buchnera aphidicola subsp. Acyrthosiphon pisum (strain 5A).